Reading from the N-terminus, the 55-residue chain is Large ribosomal subunit protein bL33 (55 aa).

It belongs to the bacterial ribosomal protein bL33 family.

This is Large ribosomal subunit protein bL33 from Bordetella avium (strain 197N).